Consider the following 480-residue polypeptide: ATP synthase subunit beta (480 aa).

152–159 (GGAGVGKT) serves as a coordination point for ATP.

This sequence belongs to the ATPase alpha/beta chains family. F-type ATPases have 2 components, CF(1) - the catalytic core - and CF(0) - the membrane proton channel. CF(1) has five subunits: alpha(3), beta(3), gamma(1), delta(1), epsilon(1). CF(0) has three main subunits: a(1), b(2) and c(9-12). The alpha and beta chains form an alternating ring which encloses part of the gamma chain. CF(1) is attached to CF(0) by a central stalk formed by the gamma and epsilon chains, while a peripheral stalk is formed by the delta and b chains.

The protein localises to the cell membrane. It carries out the reaction ATP + H2O + 4 H(+)(in) = ADP + phosphate + 5 H(+)(out). Its function is as follows. Produces ATP from ADP in the presence of a proton gradient across the membrane. The catalytic sites are hosted primarily by the beta subunits. In Wolbachia sp. subsp. Brugia malayi (strain TRS), this protein is ATP synthase subunit beta.